We begin with the raw amino-acid sequence, 194 residues long: dTTP/UTP pyrophosphatase (194 aa).

Asp69 serves as the catalytic Proton acceptor.

This sequence belongs to the Maf family. YhdE subfamily. Requires a divalent metal cation as cofactor.

Its subcellular location is the cytoplasm. It catalyses the reaction dTTP + H2O = dTMP + diphosphate + H(+). It carries out the reaction UTP + H2O = UMP + diphosphate + H(+). Functionally, nucleoside triphosphate pyrophosphatase that hydrolyzes dTTP and UTP. May have a dual role in cell division arrest and in preventing the incorporation of modified nucleotides into cellular nucleic acids. This Symbiobacterium thermophilum (strain DSM 24528 / JCM 14929 / IAM 14863 / T) protein is dTTP/UTP pyrophosphatase.